The chain runs to 533 residues: Probable galacturonosyltransferase 13 (533 aa).

Residues 1–40 are Cytoplasmic-facing; sequence MQLHISPSMRSITISSSNEFIDLMKIKVAARHISYRTLFH. The chain crosses the membrane as a helical; Signal-anchor for type II membrane protein span at residues 41–61; that stretch reads TILILAFLLPFVFILTAVVTL. The Lumenal segment spans residues 62-533; that stretch reads EGVNKCSSFD…DFIKNCHILE (472 aa). Asn-306, Asn-396, Asn-445, and Asn-520 each carry an N-linked (GlcNAc...) asparagine glycan.

This sequence belongs to the glycosyltransferase 8 family. As to expression, expressed in roots, inflorescences, siliques, leaves and stems. Accumulates in pollen grains.

The protein localises to the golgi apparatus membrane. It participates in glycan metabolism; pectin biosynthesis. Its function is as follows. May be involved in pectin and/or xylans biosynthesis in cell walls. Together with GAUT14, required for pollen tube growth, possibly through the regulation of pectin biosynthesis and repartition in the pollen tube wall. The sequence is that of Probable galacturonosyltransferase 13 from Arabidopsis thaliana (Mouse-ear cress).